A 224-amino-acid chain; its full sequence is Orotidine 5'-phosphate decarboxylase (224 aa).

Substrate-binding positions include aspartate 10, lysine 32, 59-68 (DLKLHDIPNT), threonine 115, arginine 175, glutamine 184, glycine 204, and arginine 205. The Proton donor role is filled by lysine 61.

The protein belongs to the OMP decarboxylase family. Type 1 subfamily. In terms of assembly, homodimer.

The catalysed reaction is orotidine 5'-phosphate + H(+) = UMP + CO2. It participates in pyrimidine metabolism; UMP biosynthesis via de novo pathway; UMP from orotate: step 2/2. Catalyzes the decarboxylation of orotidine 5'-monophosphate (OMP) to uridine 5'-monophosphate (UMP). This chain is Orotidine 5'-phosphate decarboxylase, found in Erythrobacter litoralis (strain HTCC2594).